The sequence spans 177 residues: Large ribosomal subunit protein uL6 (177 aa).

It belongs to the universal ribosomal protein uL6 family. Part of the 50S ribosomal subunit.

This protein binds to the 23S rRNA, and is important in its secondary structure. It is located near the subunit interface in the base of the L7/L12 stalk, and near the tRNA binding site of the peptidyltransferase center. This is Large ribosomal subunit protein uL6 from Cupriavidus pinatubonensis (strain JMP 134 / LMG 1197) (Cupriavidus necator (strain JMP 134)).